The sequence spans 104 residues: Inclusion membrane protein F (104 aa).

2 helical membrane-spanning segments follow: residues 39 to 59 (LVVA…SLVA) and 70 to 90 (LAVL…VLFI).

The protein resides in the secreted. Its subcellular location is the host vacuole. The protein localises to the host pathogen-containing vacuole. It is found in the host pathogen-containing vacuole membrane. In terms of biological role, inclusion membrane protein probably involved in early modification events of the chlamydial inclusion. The sequence is that of Inclusion membrane protein F from Chlamydia trachomatis serovar L2 (strain ATCC VR-902B / DSM 19102 / 434/Bu).